Here is a 225-residue protein sequence, read N- to C-terminus: Lipoprotein CseA (225 aa).

Residues 1–36 form the signal peptide; sequence MRGLTDGRTPRGTRRTTQAASTAVAVFVALGVSLAG. Cysteine 37 carries N-palmitoyl cysteine lipidation. Cysteine 37 carries the S-diacylglycerol cysteine lipid modification. Disordered stretches follow at residues 40–77 and 205–225; these read GGTGARDEGPAHADAVGGAGSASPAPAAKASPSKAPDR and THNDYSKAAGNAPTPAPEPDS. Residues 60 to 73 show a composition bias toward low complexity; it reads SASPAPAAKASPSK.

Its subcellular location is the cell membrane. Functionally, may be involved in the stabilization of the cell envelope or may interact with the sensor protein CseC to modulate its activity, in response to cell envelope stress. The protein is Lipoprotein CseA (cseA) of Streptomyces coelicolor (strain ATCC BAA-471 / A3(2) / M145).